Consider the following 200-residue polypeptide: Glutathione peroxidase 1 (200 aa).

Serine 31 carries the phosphoserine modification. The active site involves selenocysteine 46. Residue selenocysteine 46 is a non-standard amino acid, selenocysteine. Residues lysine 85 and lysine 111 each carry the N6-acetyllysine; alternate modification. Lysine 85 and lysine 111 each carry N6-succinyllysine; alternate. Lysine 118 is subject to N6-acetyllysine. Position 145 is an N6-acetyllysine; alternate (lysine 145). At lysine 145 the chain carries N6-succinyllysine; alternate. Residue serine 194 is modified to Phosphoserine.

It belongs to the glutathione peroxidase family. In terms of assembly, homotetramer. Interacts with MIEN1. Post-translationally, during periods of oxidative stress, Sec-46 may react with a superoxide radical, irreversibly lose hydroselenide and be converted to dehydroalanine.

The protein localises to the cytoplasm. Its subcellular location is the mitochondrion. It carries out the reaction 2 glutathione + H2O2 = glutathione disulfide + 2 H2O. The catalysed reaction is a hydroperoxy polyunsaturated fatty acid + 2 glutathione = a hydroxy polyunsaturated fatty acid + glutathione disulfide + H2O. It catalyses the reaction tert-butyl hydroperoxide + 2 glutathione = tert-butanol + glutathione disulfide + H2O. The enzyme catalyses cumene hydroperoxide + 2 glutathione = 2-phenylpropan-2-ol + glutathione disulfide + H2O. It carries out the reaction (13S)-hydroperoxy-(9Z,11E)-octadecadienoate + 2 glutathione = (13S)-hydroxy-(9Z,11E)-octadecadienoate + glutathione disulfide + H2O. The catalysed reaction is (9S)-hydroperoxy-(10E,12Z)-octadecadienoate + 2 glutathione = (9S)-hydroxy-(10E,12Z)-octadecadienoate + glutathione disulfide + H2O. It catalyses the reaction (5S)-hydroperoxy-(6E,8Z,11Z,14Z)-eicosatetraenoate + 2 glutathione = (5S)-hydroxy-(6E,8Z,11Z,14Z)-eicosatetraenoate + glutathione disulfide + H2O. The enzyme catalyses (12S)-hydroperoxy-(5Z,8Z,10E,14Z)-eicosatetraenoate + 2 glutathione = (12S)-hydroxy-(5Z,8Z,10E,14Z)-eicosatetraenoate + glutathione disulfide + H2O. It carries out the reaction (12R)-hydroperoxy-(5Z,8Z,10E,14Z)-eicosatetraenoate + 2 glutathione = (12R)-hydroxy-(5Z,8Z,10E,14Z)-eicosatetraenoate + glutathione disulfide + H2O. The catalysed reaction is (15S)-hydroperoxy-(5Z,8Z,11Z,13E)-eicosatetraenoate + 2 glutathione = (15S)-hydroxy-(5Z,8Z,11Z,13E)-eicosatetraenoate + glutathione disulfide + H2O. It catalyses the reaction (5S)-hydroperoxy-(6E,8Z,11Z,14Z,17Z)-eicosapentaenoate + 2 glutathione = (5S)-hydroxy-(6E,8Z,11Z,14Z,17Z)-eicosapentaenoate + glutathione disulfide + H2O. The enzyme catalyses (12S)-hydroperoxy-(5Z,8Z,10E,14Z,17Z)-eicosapentaenoate + 2 glutathione = (12S)-hydroxy-(5Z,8Z,10E,14Z,17Z)-eicosapentaenoate + glutathione disulfide + H2O. It carries out the reaction (15S)-hydroperoxy-(5Z,8Z,11Z,13E,17Z)-eicosapentaenoate + 2 glutathione = (15S)-hydroxy-(5Z,8Z,11Z,13E,17Z)-eicosapentaenoate + glutathione disulfide + H2O. The catalysed reaction is (15S)-hydroperoxy-(11Z,13E)-eicosadienoate + 2 glutathione = (15S)-hydroxy-(11Z,13E)-eicosadienoate + glutathione disulfide + H2O. It catalyses the reaction (17S)-hydroperoxy-(4Z,7Z,10Z,13Z,15E,19Z)-docosahexaenoate + 2 glutathione = (17S)-hydroxy-(4Z,7Z,10Z,13Z,15E,19Z)-docosahexaenoate + glutathione disulfide + H2O. In terms of biological role, catalyzes the reduction of hydroperoxides in a glutathione-dependent manner thus regulating cellular redox homeostasis. Can reduce small soluble hydroperoxides such as H2O2, cumene hydroperoxide and tert-butyl hydroperoxide, as well as several fatty acid-derived hydroperoxides. In platelets catalyzes the reduction of 12-hydroperoxyeicosatetraenoic acid, the primary product of the arachidonate 12-lipoxygenase pathway. The sequence is that of Glutathione peroxidase 1 (GPX1) from Oryctolagus cuniculus (Rabbit).